The following is a 247-amino-acid chain: Small ribosomal subunit protein uS2 (247 aa).

This sequence belongs to the universal ribosomal protein uS2 family.

The sequence is that of Small ribosomal subunit protein uS2 from Ralstonia nicotianae (strain ATCC BAA-1114 / GMI1000) (Ralstonia solanacearum).